We begin with the raw amino-acid sequence, 264 residues long: uncharacterized protein (264 aa).

The signal sequence occupies residues 1-21; that stretch reads MMWNYFVTCIVLYANIISIHT. The interval 182-247 is disordered; the sequence is QQPNAAQVPT…AANNGLDLTS (66 aa). Residues 190–213 show a composition bias toward low complexity; it reads PTTSQQQPTSNTGGQQPPTNASNP. A glycan (N-linked (GlcNAc...) asparagine) is linked at N209. Residues 214-226 show a composition bias toward pro residues; the sequence is PTNPQPTPTPAQP. Positions 230–247 are enriched in polar residues; the sequence is GTQVQQTPAANNGLDLTS.

In terms of tissue distribution, component of the acid-insoluble and acid-soluble organic matrix of calcified layers of the shell (at protein level).

The protein localises to the secreted. This is an uncharacterized protein from Lottia gigantea (Giant owl limpet).